Reading from the N-terminus, the 126-residue chain is Fluoride-specific ion channel FluC (126 aa).

4 helical membrane passes run 6–26 (FVAV…FAVL), 36–56 (YGTL…VGFF), 69–89 (LAIT…SEVV), and 99–119 (WAGL…AFGL). Residues Gly76 and Thr79 each contribute to the Na(+) site.

Belongs to the fluoride channel Fluc/FEX (TC 1.A.43) family.

The protein resides in the cell inner membrane. It carries out the reaction fluoride(in) = fluoride(out). Its activity is regulated as follows. Na(+) is not transported, but it plays an essential structural role and its presence is essential for fluoride channel function. In terms of biological role, fluoride-specific ion channel. Important for reducing fluoride concentration in the cell, thus reducing its toxicity. The chain is Fluoride-specific ion channel FluC from Cupriavidus necator (strain ATCC 17699 / DSM 428 / KCTC 22496 / NCIMB 10442 / H16 / Stanier 337) (Ralstonia eutropha).